The chain runs to 244 residues: EEF1A lysine methyltransferase 2 (244 aa).

Positions 1–27 (MNADAEGHSGAVVPAQSPEGSSAADDF) are disordered. Ser-21 is modified (phosphoserine).

Belongs to the class I-like SAM-binding methyltransferase superfamily. EFM4 family.

The protein localises to the cytoplasm. The protein resides in the nucleus. It catalyses the reaction L-lysyl-[protein] + 3 S-adenosyl-L-methionine = N(6),N(6),N(6)-trimethyl-L-lysyl-[protein] + 3 S-adenosyl-L-homocysteine + 3 H(+). In terms of biological role, protein-lysine methyltransferase that selectively catalyzes the trimethylation of EEF1A at 'Lys-318'. The sequence is that of EEF1A lysine methyltransferase 2 from Mus musculus (Mouse).